A 324-amino-acid polypeptide reads, in one-letter code: tRNA (cytidine(32)/guanosine(34)-2'-O)-methyltransferase (324 aa).

S-adenosyl-L-methionine is bound by residues G53, W55, D75, D91, and D116. K156 functions as the Proton acceptor in the catalytic mechanism. The segment at 221-240 (DFNQLDGPTRVIVPFVACGD) is required for binding to WDR6.

This sequence belongs to the class I-like SAM-binding methyltransferase superfamily. RNA methyltransferase RlmE family. TRM7 subfamily. Interacts with WDR6; the interaction is direct, and required for 2'-O-methylation of position 34 in substrate tRNAs.

Its subcellular location is the cytoplasm. The protein resides in the nucleus. It carries out the reaction cytidine(32)/guanosine(34) in tRNA + 2 S-adenosyl-L-methionine = 2'-O-methylcytidine(32)/2'-O-methylguanosine(34) in tRNA + 2 S-adenosyl-L-homocysteine + 2 H(+). Methylates the 2'-O-ribose of nucleotides at positions 32 and 34 of the tRNA anticodon loop of substrate tRNAs. Requisite for faithful cytoplasmic translation. Requires THADA for methylation of the cytidine at position 32 of the anticodon loop of substrate tRNAs. Requires WDR6 for methylation of the nucleotide at position 34 of the anticodon loop of substrate tRNAs. Promotes translation efficiency of the UUU codon. Plays a role in neurogenesis. Required for expression of genes involved in neurogenesis and mitochondrial translation and energy generation. Requisite for RNA-mediated gene silencing. May modify position 32 in tRNA(Arg(ACG)), tRNA(Gln(CUG)), tRNA(Leu(UAA)), tRNA(Leu(UAG)), tRNA(Leu(AAG)), tRNA(Leu(CAG)), tRNA(Phe(GAA)), tRNA(Trp(CCA)) and tRNA(Val(AAC)), and position 34 in tRNA(Phe(GAA)), tRNA(Leu(CAA)), tRNA(Leu(UAA)), tRNA(Sec(UCA)), and tRNA(Trp(CCA)). The protein is tRNA (cytidine(32)/guanosine(34)-2'-O)-methyltransferase of Mus musculus (Mouse).